The chain runs to 221 residues: Thymine/uracil-DNA glycosylase (221 aa).

The HhH domain maps to 105-133; that stretch reads DYGGRVPRNRKAILDLPGVGKYTCAAVMC. Positions 197, 204, 207, and 213 each coordinate [4Fe-4S] cluster.

The protein belongs to the Nth/MutY family. It depends on [4Fe-4S] cluster as a cofactor.

The catalysed reaction is Hydrolyzes mismatched double-stranded DNA and polynucleotides, releasing free thymine.. In terms of biological role, DNA glycosylase that excises thymine from T/G mismatches and uracil from U/G mismatches. Acts as a repair enzyme able to counteract the mutagenic effect of spontaneous hydrolytic deamination of DNA 5-methylcytosine (5-meC) residues that leads to the formation of T/G mismatches. May also repair U/G mismatches arising from hydrolytic deamination of DNA cytosine residues. G/G, A/G, T/C and U/C are minor substrates. In Methanothermobacter thermautotrophicus (Methanobacterium thermoformicicum), this protein is Thymine/uracil-DNA glycosylase.